We begin with the raw amino-acid sequence, 117 residues long: Large ribosomal subunit protein bL19 (117 aa).

Belongs to the bacterial ribosomal protein bL19 family.

In terms of biological role, this protein is located at the 30S-50S ribosomal subunit interface and may play a role in the structure and function of the aminoacyl-tRNA binding site. The chain is Large ribosomal subunit protein bL19 from Photorhabdus laumondii subsp. laumondii (strain DSM 15139 / CIP 105565 / TT01) (Photorhabdus luminescens subsp. laumondii).